A 476-amino-acid chain; its full sequence is Aspartyl/glutamyl-tRNA(Asn/Gln) amidotransferase subunit B (476 aa).

Belongs to the GatB/GatE family. GatB subfamily. In terms of assembly, heterotrimer of A, B and C subunits.

The catalysed reaction is L-glutamyl-tRNA(Gln) + L-glutamine + ATP + H2O = L-glutaminyl-tRNA(Gln) + L-glutamate + ADP + phosphate + H(+). The enzyme catalyses L-aspartyl-tRNA(Asn) + L-glutamine + ATP + H2O = L-asparaginyl-tRNA(Asn) + L-glutamate + ADP + phosphate + 2 H(+). In terms of biological role, allows the formation of correctly charged Asn-tRNA(Asn) or Gln-tRNA(Gln) through the transamidation of misacylated Asp-tRNA(Asn) or Glu-tRNA(Gln) in organisms which lack either or both of asparaginyl-tRNA or glutaminyl-tRNA synthetases. The reaction takes place in the presence of glutamine and ATP through an activated phospho-Asp-tRNA(Asn) or phospho-Glu-tRNA(Gln). This chain is Aspartyl/glutamyl-tRNA(Asn/Gln) amidotransferase subunit B, found in Clostridium botulinum (strain Eklund 17B / Type B).